Reading from the N-terminus, the 258-residue chain is UPF0758 protein Bcep1808_2579 (258 aa).

An MPN domain is found at 136–258; sequence PIDSPGAVED…TFSFARAGWL (123 aa). His-207, His-209, and Asp-220 together coordinate Zn(2+). The short motif at 207-220 is the JAMM motif element; the sequence is HNHPSGAVQPSAED.

The protein belongs to the UPF0758 family.

In Burkholderia vietnamiensis (strain G4 / LMG 22486) (Burkholderia cepacia (strain R1808)), this protein is UPF0758 protein Bcep1808_2579.